The following is a 181-amino-acid chain: Oligoribonuclease (181 aa).

In terms of domain architecture, Exonuclease spans 8–171 (LIWIDLEMTG…QDIQESIAEL (164 aa)). Tyrosine 129 is an active-site residue.

It belongs to the oligoribonuclease family.

It localises to the cytoplasm. Its function is as follows. 3'-to-5' exoribonuclease specific for small oligoribonucleotides. This is Oligoribonuclease from Shewanella sp. (strain ANA-3).